A 221-amino-acid chain; its full sequence is Adenylate kinase (221 aa).

10 to 15 (GAGKGT) contributes to the ATP binding site. The tract at residues 30–59 (STGDMLRAAVKAGTPLGVEAKKVMDAGGLV) is NMP. AMP is bound by residues Thr31, Arg36, 57–59 (GLV), 85–88 (GFPR), and Gln92. An LID region spans residues 122–159 (GRRVHVASGRTYHLKYNPPKTEGVDDETGEPLIQRDDD). ATP is bound by residues Arg123 and 132–133 (TY). A disordered region spans residues 138-159 (NPPKTEGVDDETGEPLIQRDDD). The AMP site is built by Arg156 and Arg167. An ATP-binding site is contributed by Gly207.

The protein belongs to the adenylate kinase family. In terms of assembly, monomer.

It localises to the cytoplasm. The enzyme catalyses AMP + ATP = 2 ADP. It participates in purine metabolism; AMP biosynthesis via salvage pathway; AMP from ADP: step 1/1. Catalyzes the reversible transfer of the terminal phosphate group between ATP and AMP. Plays an important role in cellular energy homeostasis and in adenine nucleotide metabolism. The polypeptide is Adenylate kinase (Cupriavidus taiwanensis (strain DSM 17343 / BCRC 17206 / CCUG 44338 / CIP 107171 / LMG 19424 / R1) (Ralstonia taiwanensis (strain LMG 19424))).